Here is a 204-residue protein sequence, read N- to C-terminus: High frequency lysogenization protein HflD homolog (204 aa).

This sequence belongs to the HflD family.

It localises to the cytoplasm. The protein localises to the cell inner membrane. The protein is High frequency lysogenization protein HflD homolog of Stenotrophomonas maltophilia (strain K279a).